The sequence spans 239 residues: Octanoyltransferase (239 aa).

Residues 48–236 (EGGDELVWLV…AFETVFGETT (189 aa)) form the BPL/LPL catalytic domain. Residues 87 to 94 (RGGEYTYH), 167 to 169 (ALG), and 180 to 182 (GLS) contribute to the substrate site. Cysteine 198 (acyl-thioester intermediate) is an active-site residue.

The protein belongs to the LipB family.

It localises to the cytoplasm. The catalysed reaction is octanoyl-[ACP] + L-lysyl-[protein] = N(6)-octanoyl-L-lysyl-[protein] + holo-[ACP] + H(+). It participates in protein modification; protein lipoylation via endogenous pathway; protein N(6)-(lipoyl)lysine from octanoyl-[acyl-carrier-protein]: step 1/2. Functionally, catalyzes the transfer of endogenously produced octanoic acid from octanoyl-acyl-carrier-protein onto the lipoyl domains of lipoate-dependent enzymes. Lipoyl-ACP can also act as a substrate although octanoyl-ACP is likely to be the physiological substrate. This chain is Octanoyltransferase, found in Rhizobium etli (strain ATCC 51251 / DSM 11541 / JCM 21823 / NBRC 15573 / CFN 42).